The primary structure comprises 206 residues: MALPCTLGLGMLLALPGALGSGGSAEDSVGSSSVTVVLLLLLLLLLATGLALAWRRLSRDSGGYYHPARLGAALWGRTRRLLWASPPGRWLQARAELGSTDNDLERQEDEQDTDYDHVADGGLQADPGEGEQQCGEASSPEQVPVRAEEARDSDTEGDLVLGSPGPASAGGSAEALLSDLHAFAGSAAWDDSARAAGGQGLHVTAL.

A helical transmembrane segment spans residues 34–54 (VTVVLLLLLLLLLATGLALAW). The tract at residues 98–173 (GSTDNDLERQ…PGPASAGGSA (76 aa)) is disordered. Phosphoserine occurs at positions 99 and 153. A compositionally biased stretch (low complexity) spans 161-173 (LGSPGPASAGGSA).

As to quaternary structure, interacts with CD45/PTPRC. Phosphorylated on tyrosine residues.

It is found in the membrane. In Homo sapiens (Human), this protein is Protein tyrosine phosphatase receptor type C-associated protein (PTPRCAP).